The sequence spans 247 residues: Geranylgeranylglyceryl phosphate synthase (247 aa).

The Mg(2+) site is built by Asp-24 and Ser-53. Residues 172–178 (YLEAGSG), 203–204 (GG), and 225–226 (GT) each bind sn-glycerol 1-phosphate.

It belongs to the GGGP/HepGP synthase family. Group II subfamily. Mg(2+) serves as cofactor.

The protein resides in the cytoplasm. It catalyses the reaction sn-glycerol 1-phosphate + (2E,6E,10E)-geranylgeranyl diphosphate = sn-3-O-(geranylgeranyl)glycerol 1-phosphate + diphosphate. Its pathway is membrane lipid metabolism; glycerophospholipid metabolism. In terms of biological role, prenyltransferase that catalyzes the transfer of the geranylgeranyl moiety of geranylgeranyl diphosphate (GGPP) to the C3 hydroxyl of sn-glycerol-1-phosphate (G1P). This reaction is the first ether-bond-formation step in the biosynthesis of archaeal membrane lipids. This Cenarchaeum symbiosum (strain A) protein is Geranylgeranylglyceryl phosphate synthase.